The sequence spans 252 residues: UPF0714 protein YndL (252 aa).

Residues 33–51 (IVKLLMIFMVFTPISSIYA) form a helical membrane-spanning segment.

Belongs to the UPF0714 family.

The protein resides in the cell membrane. This chain is UPF0714 protein YndL (yndL), found in Bacillus subtilis (strain 168).